The sequence spans 232 residues: Putative N-acetylmannosamine-6-phosphate 2-epimerase (232 aa).

It belongs to the NanE family.

The catalysed reaction is an N-acyl-D-glucosamine 6-phosphate = an N-acyl-D-mannosamine 6-phosphate. It participates in amino-sugar metabolism; N-acetylneuraminate degradation; D-fructose 6-phosphate from N-acetylneuraminate: step 3/5. Functionally, converts N-acetylmannosamine-6-phosphate (ManNAc-6-P) to N-acetylglucosamine-6-phosphate (GlcNAc-6-P). The polypeptide is Putative N-acetylmannosamine-6-phosphate 2-epimerase (Borreliella burgdorferi (strain ZS7) (Borrelia burgdorferi)).